The following is a 308-amino-acid chain: Protoheme IX farnesyltransferase (308 aa).

A run of 8 helical transmembrane segments spans residues 31-51 (VIEL…RGTV), 53-73 (PLLI…ANAL), 102-122 (NALV…WWTT), 124-144 (LLSG…YTLL), 149-169 (TSQN…IGWS), 170-190 (AVTG…FFWT), 240-260 (LALA…VWFL), and 288-308 (YLAV…PHLF).

It belongs to the UbiA prenyltransferase family. Protoheme IX farnesyltransferase subfamily.

The protein localises to the cell membrane. The catalysed reaction is heme b + (2E,6E)-farnesyl diphosphate + H2O = Fe(II)-heme o + diphosphate. The protein operates within porphyrin-containing compound metabolism; heme O biosynthesis; heme O from protoheme: step 1/1. Converts heme B (protoheme IX) to heme O by substitution of the vinyl group on carbon 2 of heme B porphyrin ring with a hydroxyethyl farnesyl side group. The polypeptide is Protoheme IX farnesyltransferase (Mycolicibacterium paratuberculosis (strain ATCC BAA-968 / K-10) (Mycobacterium paratuberculosis)).